Here is a 466-residue protein sequence, read N- to C-terminus: Ribulose bisphosphate carboxylase large chain (466 aa).

Residue Lys-5 is modified to N6,N6,N6-trimethyllysine. Residues Asn-114 and Thr-164 each coordinate substrate. Residue Lys-166 is the Proton acceptor of the active site. Lys-168 contributes to the substrate binding site. Mg(2+) contacts are provided by Lys-192, Asp-194, and Glu-195. Position 192 is an N6-carboxylysine (Lys-192). His-285 serves as the catalytic Proton acceptor. Substrate contacts are provided by Arg-286, His-318, and Ser-370.

It belongs to the RuBisCO large chain family. Type I subfamily. As to quaternary structure, heterohexadecamer of 8 large chains and 8 small chains; disulfide-linked. The disulfide link is formed within the large subunit homodimers. Requires Mg(2+) as cofactor. In terms of processing, the disulfide bond which can form in the large chain dimeric partners within the hexadecamer appears to be associated with oxidative stress and protein turnover.

It localises to the plastid. The protein localises to the chloroplast. It catalyses the reaction 2 (2R)-3-phosphoglycerate + 2 H(+) = D-ribulose 1,5-bisphosphate + CO2 + H2O. It carries out the reaction D-ribulose 1,5-bisphosphate + O2 = 2-phosphoglycolate + (2R)-3-phosphoglycerate + 2 H(+). Its function is as follows. RuBisCO catalyzes two reactions: the carboxylation of D-ribulose 1,5-bisphosphate, the primary event in carbon dioxide fixation, as well as the oxidative fragmentation of the pentose substrate in the photorespiration process. Both reactions occur simultaneously and in competition at the same active site. This chain is Ribulose bisphosphate carboxylase large chain, found in Betula nigra (River birch).